A 210-amino-acid polypeptide reads, in one-letter code: Chaperone protein TorD (210 aa).

This sequence belongs to the TorD/DmsD family. TorD subfamily.

The protein localises to the cytoplasm. Its function is as follows. Involved in the biogenesis of TorA. Acts on TorA before the insertion of the molybdenum cofactor and, as a result, probably favors a conformation of the apoenzyme that is competent for acquiring the cofactor. The polypeptide is Chaperone protein TorD (Salmonella agona (strain SL483)).